Here is a 141-residue protein sequence, read N- to C-terminus: Large ribosomal subunit protein uL16 (141 aa).

The segment at 1–23 is disordered; it reads MLMPKRTKWRKQQKGRNRGKSFR.

Belongs to the universal ribosomal protein uL16 family. Part of the 50S ribosomal subunit.

In terms of biological role, binds 23S rRNA and is also seen to make contacts with the A and possibly P site tRNAs. The chain is Large ribosomal subunit protein uL16 from Sulfurovum sp. (strain NBC37-1).